Here is a 386-residue protein sequence, read N- to C-terminus: GTPase Obg (386 aa).

The 159-residue stretch at Met1–Leu159 folds into the Obg domain. The OBG-type G domain occupies Ala160–Glu333. GTP-binding positions include Gly166–Ser173, Phe191–Val195, Asp213–Gly216, Asn283–Asp286, and Ala314–Ile316. Residues Ser173 and Thr193 each contribute to the Mg(2+) site.

The protein belongs to the TRAFAC class OBG-HflX-like GTPase superfamily. OBG GTPase family. As to quaternary structure, monomer. Mg(2+) serves as cofactor.

The protein resides in the cytoplasm. Functionally, an essential GTPase which binds GTP, GDP and possibly (p)ppGpp with moderate affinity, with high nucleotide exchange rates and a fairly low GTP hydrolysis rate. Plays a role in control of the cell cycle, stress response, ribosome biogenesis and in those bacteria that undergo differentiation, in morphogenesis control. In Psychromonas ingrahamii (strain DSM 17664 / CCUG 51855 / 37), this protein is GTPase Obg.